The sequence spans 156 residues: Small ribosomal subunit protein uS7 (156 aa).

This sequence belongs to the universal ribosomal protein uS7 family. As to quaternary structure, part of the 30S ribosomal subunit. Contacts proteins S9 and S11.

Its function is as follows. One of the primary rRNA binding proteins, it binds directly to 16S rRNA where it nucleates assembly of the head domain of the 30S subunit. Is located at the subunit interface close to the decoding center, probably blocks exit of the E-site tRNA. The chain is Small ribosomal subunit protein uS7 from Thermosynechococcus vestitus (strain NIES-2133 / IAM M-273 / BP-1).